Consider the following 252-residue polypeptide: MTAPAICNTTETVHGIATSLGAVARQASLPRIVGTVVGITVLVVVALLVPVPTAVELRDWAKSLGAWFPLAFLLVHTVVTVPPFPRTAFTLAAGLLFGSVVGVFIAVVGSTASAVIAMLLVRATGWQLNSLVRRRAINRLDERLRERGWLAILSLRLIPVVPFAAINYAAGASGVRILSFAWATLAGLLPGTAAVVILGDAFAGSGSPLLILVSVCTGALGLTGLVYEIRNYRRQHRRMPGYDDPVREPALI.

6 consecutive transmembrane segments (helical) span residues 32-52 (IVGT…VPVP), 64-84 (LGAW…VPPF), 88-108 (AFTL…IAVV), 149-169 (WLAI…INYA), 177-197 (ILSF…AVVI), and 209-229 (LLIL…VYEI).

Belongs to the TVP38/TMEM64 family.

Its subcellular location is the cell membrane. This Mycobacterium bovis (strain ATCC BAA-935 / AF2122/97) protein is TVP38/TMEM64 family membrane protein Mb1528c.